Consider the following 403-residue polypeptide: uncharacterized protein (403 aa).

A signal peptide spans 1–26 (MYKFKTNLFLVIYFIAIFSIESSISS). Topologically, residues 27–381 (FNTEINSNSN…DSDNSSFGIS (355 aa)) are extracellular. Asn-58, Asn-90, Asn-93, Asn-124, Asn-137, Asn-371, and Asn-375 each carry an N-linked (GlcNAc...) asparagine glycan. Residues 382 to 402 (IQKYLNSFLNSFIIILIINII) traverse the membrane as a helical segment. Residue Ile-403 is a topological domain, cytoplasmic.

Its subcellular location is the membrane. This is an uncharacterized protein from Dictyostelium discoideum (Social amoeba).